Here is a 288-residue protein sequence, read N- to C-terminus: Bifunctional protein FolD (288 aa).

NADP(+) contacts are provided by residues 166–168 and Ile-232; that span reads GAS.

It belongs to the tetrahydrofolate dehydrogenase/cyclohydrolase family. Homodimer.

It carries out the reaction (6R)-5,10-methylene-5,6,7,8-tetrahydrofolate + NADP(+) = (6R)-5,10-methenyltetrahydrofolate + NADPH. The catalysed reaction is (6R)-5,10-methenyltetrahydrofolate + H2O = (6R)-10-formyltetrahydrofolate + H(+). The protein operates within one-carbon metabolism; tetrahydrofolate interconversion. Functionally, catalyzes the oxidation of 5,10-methylenetetrahydrofolate to 5,10-methenyltetrahydrofolate and then the hydrolysis of 5,10-methenyltetrahydrofolate to 10-formyltetrahydrofolate. The sequence is that of Bifunctional protein FolD from Escherichia fergusonii (strain ATCC 35469 / DSM 13698 / CCUG 18766 / IAM 14443 / JCM 21226 / LMG 7866 / NBRC 102419 / NCTC 12128 / CDC 0568-73).